A 374-amino-acid chain; its full sequence is Glutamate 5-kinase (374 aa).

Residue Lys-16 participates in ATP binding. Substrate-binding residues include Ser-56, Asp-143, and Asn-155. 175 to 176 contacts ATP; the sequence is TD. A PUA domain is found at 282 to 360; that stretch reads RGRVVLDAGA…SEIEAVLGYV (79 aa).

It belongs to the glutamate 5-kinase family.

The protein resides in the cytoplasm. The enzyme catalyses L-glutamate + ATP = L-glutamyl 5-phosphate + ADP. Its pathway is amino-acid biosynthesis; L-proline biosynthesis; L-glutamate 5-semialdehyde from L-glutamate: step 1/2. In terms of biological role, catalyzes the transfer of a phosphate group to glutamate to form L-glutamate 5-phosphate. This Ralstonia pickettii (strain 12J) protein is Glutamate 5-kinase.